Here is a 130-residue protein sequence, read N- to C-terminus: MMRQSLQAVLPEISGNKTSLLRKSVCSDILTLFNSPHSALPSLLVSGMPEWQVHNQSDKHLQSWYCRQLRSALLFHEPRIAALQVNFKEAYCHTLAISLEIMLYHDGEPLTFDLVWDNGGWCSAMLENVS.

The protein belongs to the GpW/Gp25 family. IraD subfamily. In terms of assembly, interacts with RssB.

The protein resides in the cytoplasm. Inhibits RpoS proteolysis by regulating RssB activity, thereby increasing the stability of the sigma stress factor RpoS during oxidative stress. Its effect on RpoS stability is due to its interaction with RssB, which probably blocks the interaction of RssB with RpoS, and the consequent delivery of the RssB-RpoS complex to the ClpXP protein degradation pathway. The protein is Anti-adapter protein IraD of Escherichia coli O9:H4 (strain HS).